Here is a 343-residue protein sequence, read N- to C-terminus: Heat-inducible transcription repressor HrcA (343 aa).

The protein belongs to the HrcA family.

Negative regulator of class I heat shock genes (grpE-dnaK-dnaJ and groELS operons). Prevents heat-shock induction of these operons. The chain is Heat-inducible transcription repressor HrcA from Alkaliphilus metalliredigens (strain QYMF).